The chain runs to 427 residues: Trigger factor (427 aa).

The PPIase FKBP-type domain occupies 163–248; that stretch reads GDTVVIDFVG…IHEVKAKEVP (86 aa).

It belongs to the FKBP-type PPIase family. Tig subfamily.

The protein localises to the cytoplasm. The catalysed reaction is [protein]-peptidylproline (omega=180) = [protein]-peptidylproline (omega=0). Functionally, involved in protein export. Acts as a chaperone by maintaining the newly synthesized protein in an open conformation. Functions as a peptidyl-prolyl cis-trans isomerase. This Streptococcus pneumoniae (strain ATCC 700669 / Spain 23F-1) protein is Trigger factor.